Here is a 142-residue protein sequence, read N- to C-terminus: Small ribosomal subunit protein uS12 (142 aa).

Belongs to the universal ribosomal protein uS12 family. In terms of assembly, part of the 30S ribosomal subunit.

In terms of biological role, with S4 and S5 plays an important role in translational accuracy. Located at the interface of the 30S and 50S subunits. In Methanosarcina barkeri (strain Fusaro / DSM 804), this protein is Small ribosomal subunit protein uS12.